A 170-amino-acid polypeptide reads, in one-letter code: Bifunctional protein PyrR (170 aa).

Residues 90–102 carry the PRPP-binding motif; sequence LVLIDDVLMSGRT.

It belongs to the purine/pyrimidine phosphoribosyltransferase family. PyrR subfamily.

It carries out the reaction UMP + diphosphate = 5-phospho-alpha-D-ribose 1-diphosphate + uracil. Its function is as follows. Regulates the transcription of the pyrimidine nucleotide (pyr) operon in response to exogenous pyrimidines. In terms of biological role, also displays a weak uracil phosphoribosyltransferase activity which is not physiologically significant. The sequence is that of Bifunctional protein PyrR from Pseudomonas syringae pv. syringae (strain B728a).